Consider the following 190-residue polypeptide: Histone-arginine methyltransferase METTL23 (190 aa).

It belongs to the methyltransferase superfamily. METTL23 family. In terms of assembly, interacts with HSPA5, HSP90B1, TUBULIN, UGGT1 and UGGT2. Interacts with TET3. Interacts with STPG4.

The protein resides in the nucleus. The protein localises to the cytoplasm. The catalysed reaction is L-arginyl-[protein] + 2 S-adenosyl-L-methionine = N(omega),N(omega)-dimethyl-L-arginyl-[protein] + 2 S-adenosyl-L-homocysteine + 2 H(+). Functionally, histone methyltransferase that dimethylates histone H3 at 'Arg-17', forming asymmetric dimethylarginine (H3R17me2a), leading to activate transcription via chromatin remodeling. Maternal factor involved in epigenetic chromatin reprogramming of the paternal genome in the zygote: mediates H3R17me2a, promoting histone H3.3 incorporation in the male pronucleus, leading to TET3 recruitment and subsequent DNA demethylation. This is Histone-arginine methyltransferase METTL23 from Homo sapiens (Human).